We begin with the raw amino-acid sequence, 142 residues long: Multiprotein-bridging factor 1a (142 aa).

Residues 51–64 are compositionally biased toward polar residues; it reads GTNKAASSGTSLNT. Positions 51–77 are disordered; it reads GTNKAASSGTSLNTKMLDDDTENLTHE. The HTH cro/C1-type domain occupies 87–141; sequence IMQARTDKKLTQSQLAQIINEKPQVIQEYESGKAIPNQQILSKLERALGAKLRGK. The H-T-H motif DNA-binding region spans 98–117; sequence QSQLAQIINEKPQVIQEYES.

The protein belongs to the MBF1 family. As to expression, expressed in leaves, roots, stems, flowers, siliques and shoots. Detected only in anthers and some seeds in siliques.

The protein localises to the nucleus. It is found in the nucleolus. Functionally, transcriptional coactivator that stimulates transcriptional activity by bridging regulatory proteins and TBP, thereby recruiting TBP to promoters occupied by DNA-binding regulators. The protein is Multiprotein-bridging factor 1a (MBF1A) of Arabidopsis thaliana (Mouse-ear cress).